The chain runs to 517 residues: Ribonuclease Y (517 aa).

The helical transmembrane segment at 1–21 (MIEVVVGIGAGLIGIGAGYLV) threads the bilayer. The region spanning 207–273 (LINVVNIKND…TRVIELLVED (67 aa)) is the KH domain. Positions 333 to 426 (ALAHSLEVAH…VCAADALSAA (94 aa)) constitute an HD domain.

This sequence belongs to the RNase Y family.

The protein resides in the cell membrane. Endoribonuclease that initiates mRNA decay. This chain is Ribonuclease Y, found in Campylobacter fetus subsp. fetus (strain 82-40).